Consider the following 303-residue polypeptide: Oxygen-dependent coproporphyrinogen-III oxidase (303 aa).

Ser93 provides a ligand contact to substrate. A divalent metal cation is bound by residues His97 and His107. Catalysis depends on His107, which acts as the Proton donor. 109–111 (NVR) is a substrate binding site. Positions 146 and 176 each coordinate a divalent metal cation. The tract at residues 241–276 (YVEFNLVYDRGTLFGLQSGGRTESILMSLPPQVRWG) is important for dimerization. 259 to 261 (GGR) lines the substrate pocket.

The protein belongs to the aerobic coproporphyrinogen-III oxidase family. In terms of assembly, homodimer. A divalent metal cation serves as cofactor.

The protein resides in the cytoplasm. The enzyme catalyses coproporphyrinogen III + O2 + 2 H(+) = protoporphyrinogen IX + 2 CO2 + 2 H2O. It functions in the pathway porphyrin-containing compound metabolism; protoporphyrin-IX biosynthesis; protoporphyrinogen-IX from coproporphyrinogen-III (O2 route): step 1/1. In terms of biological role, involved in the heme biosynthesis. Catalyzes the aerobic oxidative decarboxylation of propionate groups of rings A and B of coproporphyrinogen-III to yield the vinyl groups in protoporphyrinogen-IX. This chain is Oxygen-dependent coproporphyrinogen-III oxidase, found in Pseudomonas putida (strain W619).